We begin with the raw amino-acid sequence, 509 residues long: Probable triacylglyceride transporter ML0556 (509 aa).

13 helical membrane passes run R48–S68, L78–G98, I112–W132, A146–F166, Y171–L191, V203–Y223, V232–A252, P272–V292, A309–W329, M339–V359, L381–V403, I410–L430, and I477–S497.

This sequence belongs to the major facilitator superfamily.

Its subcellular location is the cell inner membrane. In terms of biological role, in association with lipoprotein LprG probably transports triacylglycerides (TAG) across the inner cell membrane into the periplasm; TAG probably regulates lipid metabolism and growth regulation. May be an efflux transporter and involved in maintaining correct cell wall permeability. Probably required with LprG for normal surface localization of lipoarabinomannan (LAM). This Mycobacterium leprae (strain TN) protein is Probable triacylglyceride transporter ML0556.